Consider the following 224-residue polypeptide: Myogenin (224 aa).

2 positions are modified to phosphoserine; by CaMK2G: S77 and S79. A bHLH domain is found at 81–132 (DRRRAATLREKRRLKKVNEAFEALKRSTLLNPNQRLPKVEILRSAIQYIERL). At T87 the chain carries Phosphothreonine; by CaMK2G.

Homodimer and heterodimer with E12; heterodimerization enhances MYOG DNA-binding and transcriptional activities. Interacts with SMARCA4/BRG1/BAF190A. Interacts (via C-terminal region) with SSRP1 and SUPT16H; the interaction is indicative of an interaction with the FACT complex. Interacts with CSRP3. Phosphorylated by CAMK2G on threonine and serine amino acids in a muscle activity-dependent manner. Phosphorylation of Thr-87 impairs both DNA-binding and trans-activation functions in contracting muscles.

Its subcellular location is the nucleus. In terms of biological role, acts as a transcriptional activator that promotes transcription of muscle-specific target genes and plays a role in muscle differentiation, cell cycle exit and muscle atrophy. Essential for the development of functional embryonic skeletal fiber muscle differentiation. However is dispensable for postnatal skeletal muscle growth; phosphorylation by CAMK2G inhibits its transcriptional activity in respons to muscle activity. Required for the recruitment of the FACT complex to muscle-specific promoter regions, thus promoting gene expression initiation. During terminal myoblast differentiation, plays a role as a strong activator of transcription at loci with an open chromatin structure previously initiated by MYOD1. Together with MYF5 and MYOD1, co-occupies muscle-specific gene promoter core regions during myogenesis. Also cooperates with myocyte-specific enhancer factor MEF2D and BRG1-dependent recruitment of SWI/SNF chromatin-remodeling enzymes to alter chromatin structure at myogenic late gene promoters. Facilitates cell cycle exit during terminal muscle differentiation through the up-regulation of miR-20a expression, which in turn represses genes involved in cell cycle progression. Binds to the E-box containing (E1) promoter region of the miR-20a gene. Also plays a role in preventing reversal of muscle cell differentiation. Contributes to the atrophy-related gene expression in adult denervated muscles. Induces fibroblasts to differentiate into myoblasts. The protein is Myogenin (MYOG) of Homo sapiens (Human).